The primary structure comprises 622 residues: MTTPPHLSDRYELGDILGFGGMSEVHLARDIRLHRDVAVKVLRADLARDPSFYLRFRREAQNAAALNHPSIVAVYDTGEAETSAGPLPYIVMEYVDGATLRDIVHTDGPMPPQQAIEIVADACQALNFSHQNGIIHRDVKPANIMISATNAVKVMDFGIARAIADSTSVTQTAAVIGTAQYLSPEQARGDSVDARSDVYSLGCVLYEILTGEPPFIGDSPVSVAYQHVREDPIPPSQRHEGISVDLDAVVLKALAKNPENRYQTAAEMRADLIRVHSGQPPEAPKVLTDADRSCLLSSGAGNFGVPRTDALSRQSLDETESDGSIGRWVAVVAVLAVLTIAIVAAFNTFGGNTRDVQVPDVRGQVSADAISALQNRGFKTRTLQKPDSTIPPDHVISTEPGANASVGAGDEITINVSTGPEQREVPDVSSLNYTDAVKKLTSSGFKSFKQANSPSTPELLGKVIGTNPSANQTSAITNVITIIVGSGPETKQIPDVTGQIVEIAQKNLNVYGFTKFSQASVDSPRPTGEVIGTNPPKDATVPVDSVIELQVSKGNQFVMPDLSGMFWADAEPRLRALGWTGVLDKGPDVDAGGSQHNRVAYQNPPAGAGVNRDGIITLKFGQ.

Topologically, residues 1–328 are cytoplasmic; that stretch reads MTTPPHLSDR…TESDGSIGRW (328 aa). Residues 11 to 273 enclose the Protein kinase domain; it reads YELGDILGFG…TAAEMRADLI (263 aa). Residues 17–25, lysine 40, and 93–95 each bind ATP; these read LGFGGMSEV and EYV. The active-site Proton acceptor is aspartate 138. ATP contacts are provided by residues 140-143 and aspartate 156; that span reads KPAN. Residues asparagine 143 and aspartate 156 each contribute to the Mg(2+) site. A phosphoserine; by autocatalysis mark is found at serine 166 and serine 168. Threonine 170, threonine 172, and threonine 308 each carry phosphothreonine; by autocatalysis. The chain crosses the membrane as a helical span at residues 329 to 349; sequence VAVVAVLAVLTIAIVAAFNTF. The Extracellular portion of the chain corresponds to 350 to 622; sequence GGNTRDVQVP…DGIITLKFGQ (273 aa). PASTA domains follow at residues 352 to 418, 419 to 486, 487 to 553, and 554 to 622; these read NTRD…NVST, GPEQ…IVGS, GPET…QVSK, and GNQF…KFGQ. A disordered region spans residues 381-404; it reads RTLQKPDSTIPPDHVISTEPGANA.

It belongs to the protein kinase superfamily. Ser/Thr protein kinase family. Homodimer. In terms of processing, autophosphorylated. Dephosphorylated by PstP.

The protein resides in the cell membrane. It carries out the reaction L-seryl-[protein] + ATP = O-phospho-L-seryl-[protein] + ADP + H(+). It catalyses the reaction L-threonyl-[protein] + ATP = O-phospho-L-threonyl-[protein] + ADP + H(+). Protein kinase that regulates many aspects of mycobacterial physiology. Is a key component of a signal transduction pathway that regulates cell growth, cell shape and cell division via phosphorylation of target proteins. In Mycobacterium leprae (strain TN), this protein is Serine/threonine-protein kinase PknB (pknB).